The following is a 326-amino-acid chain: Pyruvate dehydrogenase E1 component subunit beta (326 aa).

E60 lines the thiamine diphosphate pocket. K(+) contacts are provided by I113, A161, I162, and N166.

As to quaternary structure, heterodimer of an alpha and a beta chain. Thiamine diphosphate serves as cofactor.

It is found in the plastid. The protein resides in the chloroplast. The catalysed reaction is N(6)-[(R)-lipoyl]-L-lysyl-[protein] + pyruvate + H(+) = N(6)-[(R)-S(8)-acetyldihydrolipoyl]-L-lysyl-[protein] + CO2. Its function is as follows. The pyruvate dehydrogenase complex catalyzes the overall conversion of pyruvate to acetyl-CoA and CO(2). It contains multiple copies of three enzymatic components: pyruvate dehydrogenase (E1), dihydrolipoamide acetyltransferase (E2) and lipoamide dehydrogenase (E3). This Chaetosphaeridium globosum (Charophycean green alga) protein is Pyruvate dehydrogenase E1 component subunit beta (pdhB).